A 331-amino-acid polypeptide reads, in one-letter code: Putative serine/threonine-protein kinase ZK507.1 (331 aa).

The Protein kinase domain occupies 1–270 (MKVNEEGFAI…CKLTLKEPLV (270 aa)). Aspartate 116 functions as the Proton acceptor in the catalytic mechanism. Basic and acidic residues predominate over residues 302–314 (SDRNEENSLDRSK). Residues 302-331 (SDRNEENSLDRSKTGTLSFNNSKNKKPSRY) are disordered.

It belongs to the protein kinase superfamily. Ser/Thr protein kinase family.

It carries out the reaction L-seryl-[protein] + ATP = O-phospho-L-seryl-[protein] + ADP + H(+). It catalyses the reaction L-threonyl-[protein] + ATP = O-phospho-L-threonyl-[protein] + ADP + H(+). In Caenorhabditis elegans, this protein is Putative serine/threonine-protein kinase ZK507.1.